We begin with the raw amino-acid sequence, 319 residues long: Na(+)-translocating NADH-quinone reductase subunit C (319 aa).

Residues Trp14–Val34 form a helical membrane-spanning segment. Thr283 is subject to FMN phosphoryl threonine.

It belongs to the NqrC family. In terms of assembly, composed of six subunits; NqrA, NqrB, NqrC, NqrD, NqrE and NqrF. It depends on FMN as a cofactor.

The protein resides in the cell inner membrane. It catalyses the reaction a ubiquinone + n Na(+)(in) + NADH + H(+) = a ubiquinol + n Na(+)(out) + NAD(+). Its function is as follows. NQR complex catalyzes the reduction of ubiquinone-1 to ubiquinol by two successive reactions, coupled with the transport of Na(+) ions from the cytoplasm to the periplasm. NqrA to NqrE are probably involved in the second step, the conversion of ubisemiquinone to ubiquinol. This is Na(+)-translocating NADH-quinone reductase subunit C from Chlamydia caviae (strain ATCC VR-813 / DSM 19441 / 03DC25 / GPIC) (Chlamydophila caviae).